The sequence spans 426 residues: Hemojuvelin (426 aa).

An N-terminal signal peptide occupies residues methionine 1–serine 35. Residue tyrosine 46 is modified to Phosphotyrosine. Residue asparagine 118 is glycosylated (N-linked (GlcNAc...) asparagine). Residues cysteine 119–leucine 142 are disordered. 2 disulfide bridges follow: cysteine 148-cysteine 230 and cysteine 167-cysteine 317. Residues asparagine 213 and asparagine 372 are each glycosylated (N-linked (GlcNAc...) asparagine). Residue aspartate 400 is the site of GPI-anchor amidated aspartate attachment. Positions alanine 401 to glutamine 426 are cleaved as a propeptide — removed in mature form.

This sequence belongs to the repulsive guidance molecule (RGM) family. As to quaternary structure, interacts with BMP2 and BMP4. Interacts with BMP6. Interacts with BMPR1B. Interacts with TMPRSS6. Post-translationally, autocatalytically cleaved at low pH; the two chains remain linked via two disulfide bonds. Also proteolytically processed by TMPRSS6, several fragments being released in the extracellular space; regulates HJV activity in BMP signaling and thefore iron homeostasis. As to expression, adult and fetal liver, heart, and skeletal muscle.

The protein resides in the cell membrane. In terms of biological role, acts as a bone morphogenetic protein (BMP) coreceptor. Through enhancement of BMP signaling regulates hepcidin (HAMP) expression and regulates iron homeostasis. This is Hemojuvelin from Homo sapiens (Human).